The primary structure comprises 236 residues: NEP1-interacting protein 1 (236 aa).

The Lumenal, thylakoid portion of the chain corresponds to 1 to 44; that stretch reads MASSRFQSGFCPISSCPSLENFIERIKDACRFTLSAVLGTILSA. A helical transmembrane segment spans residues 45–65; the sequence is VLTFFFALVGTLLGALTGALI. Residues 66-78 lie on the Stromal side of the membrane; sequence GQETESGFIRGAA. A helical transmembrane segment spans residues 79 to 99; it reads VGAISGAVFSIEVFESSLVLW. At 100 to 104 the chain is on the lumenal, thylakoid side; that stretch reads KSNES. A helical transmembrane segment spans residues 105 to 125; it reads RFGCLLYLIDVIVSLISGRLV. The Stromal segment spans residues 126–236; the sequence is RERIGPAMLS…GSCPMCRRDL (111 aa). The RING-type; atypical zinc-finger motif lies at 191-233; the sequence is CSVCLQDFQLGETVRSLPHCHHMFHLPCIDNWLFRHGSCPMCR.

The protein belongs to the RING-type zinc finger family. NIP subfamily. As to quaternary structure, interacts with RPOT2.

The protein localises to the plastid. It localises to the chloroplast thylakoid membrane. Intrinsic thylakoid membrane protein that fixes RPOT2 on the stromal side of the thylakoid membrane. The chain is NEP1-interacting protein 1 (NIP1) from Arabidopsis thaliana (Mouse-ear cress).